Here is a 424-residue protein sequence, read N- to C-terminus: MKLEMICTGEEVLAGQIVDTNAAWFANMLMEHGVECQRRITVGDRLEDLVAVFQERSTEADVIVVNGGLGPTSDDLSSEAMALAKGEPLVENKIWRDRLDDWFTRNGRVMAESNLKQALIPESAIMIDNPVGTACGFAVKLNRAWLFFTPGVPFEFKQMIKEQFIPFINERFEIAGDVALRKYLTLGQGESSLADALETIVLPEGITIGYRSSMPHIEIKLFARGKAAISEMDKIEAQIRFLLGTAIVANNKKSLAEEIHALLIDSGKTLSAAESCTGGMIASQLISHAGSSAYLDQGLVTYSNESKVKVLGVKPETLDDHGAVSIATVEEMASGARAILNSDYALATSGIAGPTGGTEDKPVGTVAIALATKSGVYSQMIKLPRRSRDLVRSLSTAVAFDMLRRELLDEAVIVDYGSIKRFQK.

The protein belongs to the CinA family.

The polypeptide is CinA-like protein (Shewanella piezotolerans (strain WP3 / JCM 13877)).